We begin with the raw amino-acid sequence, 590 residues long: Aspartate--tRNA(Asp/Asn) ligase (590 aa).

Position 182 (Glu182) interacts with L-aspartate. The segment at Gln206 to Lys209 is aspartate. Arg228 contacts L-aspartate. ATP is bound by residues Arg228–Glu230 and Gln237. His454 provides a ligand contact to L-aspartate. Position 488 (Glu488) interacts with ATP. Arg495 is a binding site for L-aspartate. Gly540–Arg543 contributes to the ATP binding site.

This sequence belongs to the class-II aminoacyl-tRNA synthetase family. Type 1 subfamily. In terms of assembly, homodimer.

The protein localises to the cytoplasm. It carries out the reaction tRNA(Asx) + L-aspartate + ATP = L-aspartyl-tRNA(Asx) + AMP + diphosphate. Functionally, aspartyl-tRNA synthetase with relaxed tRNA specificity since it is able to aspartylate not only its cognate tRNA(Asp) but also tRNA(Asn). Reaction proceeds in two steps: L-aspartate is first activated by ATP to form Asp-AMP and then transferred to the acceptor end of tRNA(Asp/Asn). The sequence is that of Aspartate--tRNA(Asp/Asn) ligase from Halothermothrix orenii (strain H 168 / OCM 544 / DSM 9562).